The sequence spans 506 residues: MASMFRPPESNRSHQKTPKLTLPVNLVQNAKSTNDGQHLNRSPYSSVNESPYSNNSTSATSTTSSMASNSTLLYNRSSTTTIKNRPVPPPLPPLVLTQKKDGIEYRVAGDSQLSERFSNLHVDITYKELLSSAPISTKLSNIDTTFIKKDLDTPEGEDSYPSTLLSAYDFSSSGSNSAPLSANNIISCSNLIQGKDVDQLEEEAWRFGHLKDEITTLGILGEGAGGSVAKCRLKNGKKVFALKTINTMNTDPEYQKQIFRELQFNKSFKSDYIVQYYGMFTDEQSSSIYIAMEYMGGKSLEATYKNLLKRGGRISERVIGKIAESVLRGLSYLHERKVIHRDIKPQNILLNEKGEIKLCDFGVSGEAVNSLAMTFTGTSFYMAPERIQGQPYSVTCDVWSLGLTLLEVAGGRFPFESDKITQNVAPIELLTMILTFSPQLKDEPELDISWSKTFRSFIDYCLKKDARERPSPRQMLKHPWIVGQMKKKVNMERFVKKCWEKEKDGI.

The tract at residues 1 to 69 (MASMFRPPES…TSTTSSMASN (69 aa)) is disordered. Residues 26-52 (LVQNAKSTNDGQHLNRSPYSSVNESPY) are compositionally biased toward polar residues. Positions 53–69 (SNNSTSATSTTSSMASN) are enriched in low complexity. The Protein kinase domain maps to 214–481 (ITTLGILGEG…PRQMLKHPWI (268 aa)). ATP contacts are provided by residues 220–228 (LGEGAGGSV) and K243. Residue D342 is the Proton acceptor of the active site.

This sequence belongs to the protein kinase superfamily. STE Ser/Thr protein kinase family. MAP kinase kinase subfamily.

The enzyme catalyses L-seryl-[protein] + ATP = O-phospho-L-seryl-[protein] + ADP + H(+). It catalyses the reaction L-threonyl-[protein] + ATP = O-phospho-L-threonyl-[protein] + ADP + H(+). The catalysed reaction is L-tyrosyl-[protein] + ATP = O-phospho-L-tyrosyl-[protein] + ADP + H(+). Serine/threonine protein kinase involved in a signal transduction pathway that plays a role in yeast cell morphogenesis and cell growth. This pathway seems to start by SMP3; then involves the kinase PKC1 that may act on the BCK1 kinase that then phosphorylates MKK1 and MKK2 which themselves phosphorylate the MPK1 kinase. This Saccharomyces cerevisiae (strain ATCC 204508 / S288c) (Baker's yeast) protein is MAP kinase kinase MKK2/SSP33 (MKK2).